Here is a 349-residue protein sequence, read N- to C-terminus: Phenylalanine--tRNA ligase alpha subunit (349 aa).

Glu-258 provides a ligand contact to Mg(2+).

This sequence belongs to the class-II aminoacyl-tRNA synthetase family. Phe-tRNA synthetase alpha subunit type 1 subfamily. In terms of assembly, tetramer of two alpha and two beta subunits. Requires Mg(2+) as cofactor.

It localises to the cytoplasm. It catalyses the reaction tRNA(Phe) + L-phenylalanine + ATP = L-phenylalanyl-tRNA(Phe) + AMP + diphosphate + H(+). This chain is Phenylalanine--tRNA ligase alpha subunit, found in Rickettsia africae (strain ESF-5).